We begin with the raw amino-acid sequence, 127 residues long: Aspartate 1-decarboxylase (127 aa).

S25 (schiff-base intermediate with substrate; via pyruvic acid) is an active-site residue. Residue S25 is modified to Pyruvic acid (Ser). T57 contributes to the substrate binding site. Catalysis depends on Y58, which acts as the Proton donor. 73–75 (GAA) is a substrate binding site.

This sequence belongs to the PanD family. In terms of assembly, heterooctamer of four alpha and four beta subunits. Pyruvate serves as cofactor. In terms of processing, is synthesized initially as an inactive proenzyme, which is activated by self-cleavage at a specific serine bond to produce a beta-subunit with a hydroxyl group at its C-terminus and an alpha-subunit with a pyruvoyl group at its N-terminus.

The protein localises to the cytoplasm. It carries out the reaction L-aspartate + H(+) = beta-alanine + CO2. Its pathway is cofactor biosynthesis; (R)-pantothenate biosynthesis; beta-alanine from L-aspartate: step 1/1. Catalyzes the pyruvoyl-dependent decarboxylation of aspartate to produce beta-alanine. The chain is Aspartate 1-decarboxylase from Bacillus pumilus (strain SAFR-032).